The chain runs to 732 residues: Catalase-peroxidase (732 aa).

Positions Trp97–Tyr220 form a cross-link, tryptophyl-tyrosyl-methioninium (Trp-Tyr) (with M-246). Catalysis depends on His98, which acts as the Proton acceptor. The segment at residues Tyr220 to Met246 is a cross-link (tryptophyl-tyrosyl-methioninium (Tyr-Met) (with W-97)). Position 261 (His261) interacts with heme b.

It belongs to the peroxidase family. Peroxidase/catalase subfamily. Homodimer or homotetramer. It depends on heme b as a cofactor. Post-translationally, formation of the three residue Trp-Tyr-Met cross-link is important for the catalase, but not the peroxidase activity of the enzyme.

It catalyses the reaction H2O2 + AH2 = A + 2 H2O. It carries out the reaction 2 H2O2 = O2 + 2 H2O. Functionally, bifunctional enzyme with both catalase and broad-spectrum peroxidase activity. This chain is Catalase-peroxidase, found in Chlorobium phaeobacteroides (strain DSM 266 / SMG 266 / 2430).